Reading from the N-terminus, the 446-residue chain is Probable D-serine dehydratase (446 aa).

Position 116 is an N6-(pyridoxal phosphate)lysine (K116).

It belongs to the serine/threonine dehydratase family. DsdA subfamily. It depends on pyridoxal 5'-phosphate as a cofactor.

It catalyses the reaction D-serine = pyruvate + NH4(+). The sequence is that of Probable D-serine dehydratase from Bacillus thuringiensis subsp. konkukian (strain 97-27).